A 156-amino-acid polypeptide reads, in one-letter code: ATP synthase subunit b (156 aa).

The helical transmembrane segment at 11-31 threads the bilayer; sequence AIAFVLFVLFCMKYVWPPLMA.

Belongs to the ATPase B chain family. As to quaternary structure, F-type ATPases have 2 components, F(1) - the catalytic core - and F(0) - the membrane proton channel. F(1) has five subunits: alpha(3), beta(3), gamma(1), delta(1), epsilon(1). F(0) has three main subunits: a(1), b(2) and c(10-14). The alpha and beta chains form an alternating ring which encloses part of the gamma chain. F(1) is attached to F(0) by a central stalk formed by the gamma and epsilon chains, while a peripheral stalk is formed by the delta and b chains.

The protein resides in the cell inner membrane. Functionally, f(1)F(0) ATP synthase produces ATP from ADP in the presence of a proton or sodium gradient. F-type ATPases consist of two structural domains, F(1) containing the extramembraneous catalytic core and F(0) containing the membrane proton channel, linked together by a central stalk and a peripheral stalk. During catalysis, ATP synthesis in the catalytic domain of F(1) is coupled via a rotary mechanism of the central stalk subunits to proton translocation. In terms of biological role, component of the F(0) channel, it forms part of the peripheral stalk, linking F(1) to F(0). This Shigella boydii serotype 18 (strain CDC 3083-94 / BS512) protein is ATP synthase subunit b.